The chain runs to 43 residues: Defensin (43 aa).

3 cysteine pairs are disulfide-bonded: C3–C34, C20–C39, and C24–C41.

The protein belongs to the invertebrate defensin family. Type 1 subfamily.

It is found in the secreted. Functionally, antibacterial peptide. Affects Gram-positive bacteria M.luteus, B.megaterium, A.viridans, S.aureus and S.saprophyticus. Moderate activity against P.acidilactici and B.subtilis QB935. Also affects Gram-negative bacterium, D22 form of E.coli. This is Defensin from Pyrrhocoris apterus (Sap sucking bug).